Consider the following 87-residue polypeptide: UPF0250 protein NE1487 (87 aa).

This sequence belongs to the UPF0250 family.

This chain is UPF0250 protein NE1487, found in Nitrosomonas europaea (strain ATCC 19718 / CIP 103999 / KCTC 2705 / NBRC 14298).